We begin with the raw amino-acid sequence, 330 residues long: Protoheme IX farnesyltransferase (330 aa).

9 helical membrane passes run 30–50, 58–78, 106–126, 127–147, 155–175, 182–202, 228–248, 249–269, and 281–301; these read LVKP…MWMA, FFIT…INMV, LIFS…FTNL, LAAG…THWL, IVIG…ATTG, WVMF…LAIL, ILLY…PLGM, LGSF…WKAV, and AASL…AMGL.

It belongs to the UbiA prenyltransferase family. Protoheme IX farnesyltransferase subfamily.

The protein localises to the cell inner membrane. The enzyme catalyses heme b + (2E,6E)-farnesyl diphosphate + H2O = Fe(II)-heme o + diphosphate. It functions in the pathway porphyrin-containing compound metabolism; heme O biosynthesis; heme O from protoheme: step 1/1. Functionally, converts heme B (protoheme IX) to heme O by substitution of the vinyl group on carbon 2 of heme B porphyrin ring with a hydroxyethyl farnesyl side group. The polypeptide is Protoheme IX farnesyltransferase (Synechococcus sp. (strain JA-2-3B'a(2-13)) (Cyanobacteria bacterium Yellowstone B-Prime)).